A 185-amino-acid polypeptide reads, in one-letter code: MISVNDFKTGLTIEVDNGIWRVLDFQHVKPGKGAAFVRSKLRNLRTGAIQEKTFRGGEKVAKAQIDNRKMAYLYADGTNHVFMDNESYEQIELPEDQIAHELKFLKENMEINIIMYQGETIGIDLPNTVELVVTATDPGIKGDTSSGGSKPATLETGLVVQVPFFVNEGDKLVINTTEAAYVSRA.

Belongs to the elongation factor P family.

The protein resides in the cytoplasm. The protein operates within protein biosynthesis; polypeptide chain elongation. Involved in peptide bond synthesis. Stimulates efficient translation and peptide-bond synthesis on native or reconstituted 70S ribosomes in vitro. Probably functions indirectly by altering the affinity of the ribosome for aminoacyl-tRNA, thus increasing their reactivity as acceptors for peptidyl transferase. The polypeptide is Elongation factor P (Listeria innocua serovar 6a (strain ATCC BAA-680 / CLIP 11262)).